We begin with the raw amino-acid sequence, 213 residues long: Putative 3-methyladenine DNA glycosylase (213 aa).

The protein belongs to the DNA glycosylase MPG family.

In Corynebacterium jeikeium (strain K411), this protein is Putative 3-methyladenine DNA glycosylase.